The following is an 815-amino-acid chain: DNA topoisomerase 1 (815 aa).

In terms of domain architecture, Toprim spans 3–119; it reads KHLLIVESPA…QRIVFTEITP (117 aa). Mg(2+)-binding residues include Glu-9 and Asp-82. Residues 133 to 573 form the Topo IA-type catalytic domain; sequence ASDLVDAQQA…KFWVPFKELV (441 aa). Residues 167 to 172 are interaction with DNA; the sequence is SAGRVQ. The active-site O-(5'-phospho-DNA)-tyrosine intermediate is the Tyr-308. The segment at 759–815 is disordered; the sequence is TGKPARKNFSTKKTATKNETRKQTTKKRTTDAKATKKVSDKPVKKQIKKRIAPNITQ. Positions 774–801 are enriched in basic and acidic residues; the sequence is TKNETRKQTTKKRTTDAKATKKVSDKPV.

Belongs to the type IA topoisomerase family. Monomer. Requires Mg(2+) as cofactor.

The catalysed reaction is ATP-independent breakage of single-stranded DNA, followed by passage and rejoining.. Functionally, releases the supercoiling and torsional tension of DNA, which is introduced during the DNA replication and transcription, by transiently cleaving and rejoining one strand of the DNA duplex. Introduces a single-strand break via transesterification at a target site in duplex DNA. The scissile phosphodiester is attacked by the catalytic tyrosine of the enzyme, resulting in the formation of a DNA-(5'-phosphotyrosyl)-enzyme intermediate and the expulsion of a 3'-OH DNA strand. The free DNA strand then undergoes passage around the unbroken strand, thus removing DNA supercoils. Finally, in the religation step, the DNA 3'-OH attacks the covalent intermediate to expel the active-site tyrosine and restore the DNA phosphodiester backbone. This chain is DNA topoisomerase 1, found in Xylella fastidiosa (strain Temecula1 / ATCC 700964).